Consider the following 499-residue polypeptide: Lysine--tRNA ligase (499 aa).

2 residues coordinate Mg(2+): E408 and E415.

It belongs to the class-II aminoacyl-tRNA synthetase family. In terms of assembly, homodimer. The cofactor is Mg(2+).

The protein resides in the cytoplasm. The enzyme catalyses tRNA(Lys) + L-lysine + ATP = L-lysyl-tRNA(Lys) + AMP + diphosphate. The polypeptide is Lysine--tRNA ligase (Bacillus cereus (strain AH820)).